The primary structure comprises 230 residues: MEGQRWLPLEANPEVTNQFLKQLGLHPNWQFVDVYGMDPELLSMVPRPVCAVLLLFPITEKYEVFRTEEEEKIKSQGQDVTPSVYFMKQTISNACGTIGLIHAIANNKNKMHFESGSTLKKFLEESASMSPDERARYLESYDAIPVTHETSAHEGQTEAPNIDEKVDLHFIALVHVDGHLYELDGRKPFPINHGETSDETLLEDAIEVCKKFMERDPDELRFNAIALSAA.

Residues 5–229 (RWLPLEANPE…LRFNAIALSA (225 aa)) form the UCH catalytic domain. Residues 8 to 13 (PLEANP) are interaction with ubiquitin. Catalysis depends on cysteine 95, which acts as the Nucleophile. Phosphoserine is present on serine 130. Residues 152–159 (AHEGQTEA) form an interaction with ubiquitin. Crossover loop which restricts access of large ubiquitin adducts to the active site region. Histidine 169 (proton donor) is an active-site residue. The segment at 219–224 (ELRFNA) is interaction with ubiquitin.

It belongs to the peptidase C12 family. As to quaternary structure, preferentially binds diubiquitin; the interaction does not hydrolyze diubiquitin but, in vitro, inhibits the hydrolyzing activity on other substrates.

The protein resides in the cytoplasm. It catalyses the reaction Thiol-dependent hydrolysis of ester, thioester, amide, peptide and isopeptide bonds formed by the C-terminal Gly of ubiquitin (a 76-residue protein attached to proteins as an intracellular targeting signal).. Inhibited by monoubiquitin and diubiquitin. In terms of biological role, deubiquitinating enzyme (DUB) that controls levels of cellular ubiquitin through processing of ubiquitin precursors and ubiquitinated proteins. Thiol protease that recognizes and hydrolyzes a peptide bond at the C-terminal glycine of either ubiquitin or NEDD8. Has a 10-fold preference for Arg and Lys at position P3, and exhibits a preference towards 'Lys-48'-linked ubiquitin chains. Deubiquitinates ENAC in apical compartments, thereby regulating apical membrane recycling. Indirectly increases the phosphorylation of IGFIR, AKT and FOXO1 and promotes insulin-signaling and insulin-induced adipogenesis. Required for stress-response retinal, skeletal muscle and germ cell maintenance. May be involved in working memory. Can hydrolyze UBB(+1), a mutated form of ubiquitin which is not effectively degraded by the proteasome. This chain is Ubiquitin carboxyl-terminal hydrolase isozyme L3 (UCHL3), found in Sus scrofa (Pig).